The following is a 550-amino-acid chain: Glucose-6-phosphate isomerase 1 (550 aa).

Glu-353 acts as the Proton donor in catalysis. Residues His-384 and Lys-512 contribute to the active site.

It belongs to the GPI family.

The protein localises to the cytoplasm. It carries out the reaction alpha-D-glucose 6-phosphate = beta-D-fructose 6-phosphate. It functions in the pathway carbohydrate biosynthesis; gluconeogenesis. It participates in carbohydrate degradation; glycolysis; D-glyceraldehyde 3-phosphate and glycerone phosphate from D-glucose: step 2/4. Its function is as follows. Catalyzes the reversible isomerization of glucose-6-phosphate to fructose-6-phosphate. This chain is Glucose-6-phosphate isomerase 1, found in Thiobacillus denitrificans (strain ATCC 25259 / T1).